We begin with the raw amino-acid sequence, 662 residues long: Phosphomethylpyrimidine synthase (662 aa).

Residues Asn235, Met264, Tyr293, His329, 349–351 (SRG), 390–393 (DGMR), and Glu429 contribute to the substrate site. His433 contributes to the Zn(2+) binding site. Tyr456 is a binding site for substrate. His497 is a Zn(2+) binding site. [4Fe-4S] cluster contacts are provided by Cys577, Cys580, and Cys585.

This sequence belongs to the ThiC family. Homodimer. It depends on [4Fe-4S] cluster as a cofactor.

The catalysed reaction is 5-amino-1-(5-phospho-beta-D-ribosyl)imidazole + S-adenosyl-L-methionine = 4-amino-2-methyl-5-(phosphooxymethyl)pyrimidine + CO + 5'-deoxyadenosine + formate + L-methionine + 3 H(+). Its pathway is cofactor biosynthesis; thiamine diphosphate biosynthesis. Its function is as follows. Catalyzes the synthesis of the hydroxymethylpyrimidine phosphate (HMP-P) moiety of thiamine from aminoimidazole ribotide (AIR) in a radical S-adenosyl-L-methionine (SAM)-dependent reaction. In Shewanella halifaxensis (strain HAW-EB4), this protein is Phosphomethylpyrimidine synthase.